The following is a 364-amino-acid chain: Uroporphyrinogen decarboxylase (364 aa).

Coproporphyrinogen I-binding residues include R34, A36, R38, R47, D83, Y161, S216, and H336. The coproporphyrinogen III site is built by R34, A36, and R38. D83, Y161, S216, and H336 together coordinate coproporphyrinogen III.

Belongs to the uroporphyrinogen decarboxylase family. Homodimer.

It localises to the cytoplasm. Its subcellular location is the cytosol. The catalysed reaction is uroporphyrinogen III + 4 H(+) = coproporphyrinogen III + 4 CO2. It carries out the reaction uroporphyrinogen I + 4 H(+) = coproporphyrinogen I + 4 CO2. The protein operates within porphyrin-containing compound metabolism; protoporphyrin-IX biosynthesis; coproporphyrinogen-III from 5-aminolevulinate: step 4/4. In terms of biological role, catalyzes the sequential decarboxylation of the four acetate side chains of uroporphyrinogen to form coproporphyrinogen and participates in the fifth step in the heme biosynthetic pathway. Isomer I or isomer III of uroporphyrinogen may serve as substrate, but only coproporphyrinogen III can ultimately be converted to heme. In vitro also decarboxylates pentacarboxylate porphyrinogen I. The protein is Uroporphyrinogen decarboxylase of Rattus norvegicus (Rat).